The chain runs to 487 residues: Glutamyl-tRNA(Gln) amidotransferase subunit A (487 aa).

Catalysis depends on charge relay system residues lysine 75 and serine 150. The active-site Acyl-ester intermediate is the serine 174.

This sequence belongs to the amidase family. GatA subfamily. As to quaternary structure, heterotrimer of A, B and C subunits.

The catalysed reaction is L-glutamyl-tRNA(Gln) + L-glutamine + ATP + H2O = L-glutaminyl-tRNA(Gln) + L-glutamate + ADP + phosphate + H(+). Functionally, allows the formation of correctly charged Gln-tRNA(Gln) through the transamidation of misacylated Glu-tRNA(Gln) in organisms which lack glutaminyl-tRNA synthetase. The reaction takes place in the presence of glutamine and ATP through an activated gamma-phospho-Glu-tRNA(Gln). The sequence is that of Glutamyl-tRNA(Gln) amidotransferase subunit A from Syntrophomonas wolfei subsp. wolfei (strain DSM 2245B / Goettingen).